A 276-amino-acid chain; its full sequence is C-type lectin domain family 12 member B (276 aa).

Topologically, residues 1-43 (MSEEVTYATLTFQDSAGARNNRDGNNLRKRGHPAPSPIWRHAA) are cytoplasmic. An ITIM motif motif is present at residues 5 to 10 (VTYATL). Tyr-7 bears the Phosphotyrosine mark. A helical; Signal-anchor for type II membrane protein membrane pass occupies residues 44–64 (LGLVTLCLMLLIGLVTLGMMF). Topologically, residues 65 to 276 (LQISNDINSD…AAPVKTEDLD (212 aa)) are extracellular. 3 N-linked (GlcNAc...) asparagine glycosylation sites follow: Asn-91, Asn-176, and Asn-237. The C-type lectin domain maps to 150–264 (YQNSCYYFTT…CSAEIFWICE (115 aa)). 2 cysteine pairs are disulfide-bonded: Cys-172–Cys-263 and Cys-242–Cys-255.

In terms of assembly, homodimer. Interacts (via ITIM motif) with PTPN6. Interacts (via ITIM motif) with PTPN11; this interaction triggers dephosphorylation and activation of PTPN11. N-glycosylated. As to expression, detected in colon, heart, kidney, liver, lung, mammary gland, ovary, spleen and testis. Expressed in melanocytes (at protein level).

Its subcellular location is the cell membrane. In terms of biological role, inhibitory receptor postulated to negatively regulate immune and non-immune functions. Upon phosphorylation, recruits SH2 domain-containing PTPN6 and PTPN11 phosphatases to its ITIM motif and antagonizes activation signals. Although it inhibits KLRK1/NKG2D-mediated signaling, it does not bind known ligands of KLRK1/NKG2D and therefore is not its inhibitory counterpart. May limit activation of myeloid cell subsets in response to infection or tissue inflammation. May protect target cells against natural killer cell-mediated lysis. May negatively regulate cell cycle and differentiation of melanocytes via inactivation of STAT3. The polypeptide is C-type lectin domain family 12 member B (Homo sapiens (Human)).